The chain runs to 182 residues: Probable RNA 2'-phosphotransferase (182 aa).

It belongs to the KptA/TPT1 family.

Functionally, removes the 2'-phosphate from RNA via an intermediate in which the phosphate is ADP-ribosylated by NAD followed by a presumed transesterification to release the RNA and generate ADP-ribose 1''-2''-cyclic phosphate (APPR&gt;P). May function as an ADP-ribosylase. This chain is Probable RNA 2'-phosphotransferase, found in Acetivibrio thermocellus (strain ATCC 27405 / DSM 1237 / JCM 9322 / NBRC 103400 / NCIMB 10682 / NRRL B-4536 / VPI 7372) (Clostridium thermocellum).